A 581-amino-acid polypeptide reads, in one-letter code: Tetratricopeptide repeat and J domain-containing co-chaperone DNJ1 (581 aa).

The N-terminal stretch at 1–19 (MKATLLPSLLALSLTLCLA) is a signal peptide. TPR repeat units follow at residues 48 to 81 (ASQH…DPSS), 82 to 115 (WLTY…NPKF), 116 to 149 (DKAY…RAEK), 221 to 254 (LETR…TPSP), 257 to 293 (LRRL…DPDN), 378 to 411 (LELH…DPDN), and 412 to 445 (VEAT…SGRT). N-linked (GlcNAc...) asparagine glycosylation occurs at Asn293. The J domain occupies 467-528 (DYYKVLGVKR…ELRKKYDQGD (62 aa)). The tract at residues 522-544 (KKYDQGDDPNDPMGGQQGGYGNP) is disordered.

In terms of assembly, interacts with the ER chaperone BIP1.

The protein localises to the endoplasmic reticulum lumen. Functionally, endoplasmic reticulum (ER) protein that functions as a co-chaperone for BIP1 during ER stress. Might be specifically involved in the refolding of N-glycosylated proteins. In Mycosarcoma maydis (Corn smut fungus), this protein is Tetratricopeptide repeat and J domain-containing co-chaperone DNJ1.